The sequence spans 305 residues: MSKKLTFQEIILTLQQFWNDQGCMLMQAYDNEKGAGTMSPYTFLRAIGPEPWNAAYVEPSRRPADGRYGENPNRLYQHHQFQVVMKPSPSNIQELYLESLEKLGINPLEHDIRFVEDNWENPSTGSAGLGWEVWLDGMEITQFTYFQQVGGLATSPVTAEVTYGLERLASYIQEVDSVYDIEWADGVKYGEIFIQPEYEHSKYSFEISDQEMLLENFDKFEKEAGRALEEGLVHPAYDYVLKCSHTFNLLDARGAVSVTERAGYIARIRNLARVVAKTFVAERKRLGYPLLDEETRAKLLAEDAE.

Belongs to the class-II aminoacyl-tRNA synthetase family. In terms of assembly, tetramer of two alpha and two beta subunits.

Its subcellular location is the cytoplasm. The catalysed reaction is tRNA(Gly) + glycine + ATP = glycyl-tRNA(Gly) + AMP + diphosphate. The sequence is that of Glycine--tRNA ligase alpha subunit from Streptococcus pneumoniae serotype 19F (strain G54).